Here is a 296-residue protein sequence, read N- to C-terminus: tRNA-cytidine(32) 2-sulfurtransferase (296 aa).

The PP-loop motif motif lies at 72–77 (SGGKDS). Positions 147, 150, and 238 each coordinate [4Fe-4S] cluster.

The protein belongs to the TtcA family. In terms of assembly, homodimer. It depends on Mg(2+) as a cofactor. The cofactor is [4Fe-4S] cluster.

The protein localises to the cytoplasm. The catalysed reaction is cytidine(32) in tRNA + S-sulfanyl-L-cysteinyl-[cysteine desulfurase] + AH2 + ATP = 2-thiocytidine(32) in tRNA + L-cysteinyl-[cysteine desulfurase] + A + AMP + diphosphate + H(+). Its pathway is tRNA modification. Functionally, catalyzes the ATP-dependent 2-thiolation of cytidine in position 32 of tRNA, to form 2-thiocytidine (s(2)C32). The sulfur atoms are provided by the cysteine/cysteine desulfurase (IscS) system. The protein is tRNA-cytidine(32) 2-sulfurtransferase of Sinorhizobium fredii (strain NBRC 101917 / NGR234).